The following is a 137-amino-acid chain: Nucleoside diphosphate kinase (137 aa).

ATP-binding residues include Lys11, Phe59, Arg87, Thr93, Arg104, and Asn114. His117 functions as the Pros-phosphohistidine intermediate in the catalytic mechanism.

It belongs to the NDK family. As to quaternary structure, homotetramer. Requires Mg(2+) as cofactor.

It is found in the cytoplasm. The catalysed reaction is a 2'-deoxyribonucleoside 5'-diphosphate + ATP = a 2'-deoxyribonucleoside 5'-triphosphate + ADP. It catalyses the reaction a ribonucleoside 5'-diphosphate + ATP = a ribonucleoside 5'-triphosphate + ADP. Functionally, major role in the synthesis of nucleoside triphosphates other than ATP. The ATP gamma phosphate is transferred to the NDP beta phosphate via a ping-pong mechanism, using a phosphorylated active-site intermediate. This is Nucleoside diphosphate kinase from Frankia casuarinae (strain DSM 45818 / CECT 9043 / HFP020203 / CcI3).